Consider the following 111-residue polypeptide: uncharacterized protein (111 aa).

The protein belongs to the SUI1 family.

This is an uncharacterized protein from Synechocystis sp. (strain ATCC 27184 / PCC 6803 / Kazusa).